A 444-amino-acid polypeptide reads, in one-letter code: Putative GTP cyclohydrolase URC1 (444 aa).

268 to 272 (RVHDE) serves as a coordination point for GTP. Residues Cys273, Cys284, and Cys286 each coordinate Zn(2+). GTP is bound at residue 315 to 317 (EGR). Residue Asp353 is the Proton acceptor of the active site. Arg355 (nucleophile) is an active-site residue. GTP-binding residues include Ser377 and Lys382.

Belongs to the GTP cyclohydrolase II family.

The protein resides in the cytoplasm. It is found in the nucleus. Functionally, involved in uracil catabolism. The polypeptide is Putative GTP cyclohydrolase URC1 (URC1) (Lachancea kluyveri (Yeast)).